Reading from the N-terminus, the 1132-residue chain is MELFQAKDHYILQQGERALWCSRRDGGLQLRPATDLLLAWNPICLGLVEGVIGKIQLHSDLPWWLILIRQKALVGKLPGDHEVCKVTKIAVLSLSEMEPQDLELELCKKHHFGINKPEKIIPSPDDSKFLLKTFTHIKSNVSAPNKKKVKESKEKEKLERRLLEELLKMFMDSESFYYSLTYDLTNSVQRQSTGERDGRPLWQKVDDRFFWNKYMIQDLTEIGTPDVDFWIIPMIQGFVQIEELVVNYTESSDDEKSSPETPPQESTCVDDIHPRFLVALISRRSRHRAGMRYKRRGVDKNGNVANYVETEQLIHVHNHTLSFVQTRGSVPVFWSQVGYRYNPRPRLDRSEKETVAYFCAHFEEQLNIYKKQVIINLVDQAGREKIIGDAYLKQVLLFNNSHLTYVSFDFHEHCRGMKFENVQTLTDAIYDIILDMKWCWVDEAGVICKQEGIFRVNCMDCLDRTNVVQAAIARVVMEQQLKKLGVMPPEQPLPVKCNRIYQIMWANNGDSISRQYAGTAALKGDFTRTGERKLAGVMKDGVNSANRYYLNRFKDAYRQAVIDLMQGIPVTEDLYSIFTKEKEHEALHKENQRSHQELISQLLQSYMKLLLPDDEKFHGGWALIDCDPSLIDATHRDVDVLLLLSNSAYYVAYYDDEVDKVNQYQRLSLENLEKIEIGPEPTLFGKPKFSCMRLHYRYKEASGYFHTLRAVMRNPEEDGKDTLQCIAEMLQITKQAMGSDLPIIEKKLERKSSKPHEDIIGIRSQNQGSLAQGKNFLMSKFSSLNQKVKQTKSNVNIGNLRKLGNFTKPEMKVNFLKPNLKVNLWKSDSSLETMENTGVMDKVQAESDGDMSSDNDSYHSDEFLTNSKSDEDRQLANSLESVGPIDYVLPSCGIIASAPRLGSRSQSLSSTDSSVHAPSEITVAHGSGLGKGQESPLKKSPSAGDVHILTGFAKPMDIYCHRFVQDAQNKVTHLSETRSVSQQASQERNQMTNQVSNETQSESTEQTPSRPSQLDVSLSATGPQFLSVEPAHSVASQKTPTSASSMLELETGLHVTPSPSESSSSRAVSPFAKIRSSMVQVASITQAGLTHGINFAVSKVQKSPPEPEIINQVQQNELKKMFIQCQTRIIQI.

The SAC domain occupies 167 to 518 (LKMFMDSESF…GDSISRQYAG (352 aa)). A hSac2 domain is found at 593 to 760 (RSHQELISQL…KSSKPHEDII (168 aa)). Phosphoserine occurs at positions 827 and 830. The tract at residues 846-875 (ESDGDMSSDNDSYHSDEFLTNSKSDEDRQL) is disordered. Residues 856–874 (DSYHSDEFLTNSKSDEDRQ) are compositionally biased toward basic and acidic residues. A phosphoserine mark is found at Ser-878, Ser-881, Ser-907, and Ser-910. 2 disordered regions span residues 923–942 (VAHG…KSPS) and 974–1017 (LSET…LDVS). Phosphoserine is present on Ser-1103.

As to quaternary structure, homodimer. Interacts with OCRL and RAB5A. Interacts with INPP5B and INPP4A. Interacts with STAT3; the interaction is independent of STAT3 'Tyr-705' phosphorylation status. As to expression, ubiquitous. Highly expressed in brain.

The protein resides in the membrane. It is found in the clathrin-coated pit. It localises to the early endosome. The protein localises to the recycling endosome. The enzyme catalyses a myo-inositol phosphate + H2O = myo-inositol + phosphate. In terms of biological role, inositol 4-phosphatase which mainly acts on phosphatidylinositol 4-phosphate. May be functionally linked to OCRL, which converts phosphatidylinositol 4,5-bisphosphate to phosphatidylinositol, for a sequential dephosphorylation of phosphatidylinositol 4,5-bisphosphate at the 5 and 4 position of inositol, thus playing an important role in the endocytic recycling. Regulator of TF:TFRC and integrins recycling pathway, is also involved in cell migration mechanisms. Modulates AKT/GSK3B pathway by decreasing AKT and GSK3B phosphorylation. Negatively regulates STAT3 signaling pathway through inhibition of STAT3 phosphorylation and translocation to the nucleus. Functionally important modulator of cardiac myocyte size and of the cardiac response to stress. May play a role as negative regulator of axon regeneration after central nervous system injuries. This is Phosphatidylinositide phosphatase SAC2 from Homo sapiens (Human).